Here is a 357-residue protein sequence, read N- to C-terminus: Probable dual-specificity RNA methyltransferase RlmN (357 aa).

Glu-95 functions as the Proton acceptor in the catalytic mechanism. The Radical SAM core domain maps to 105 to 343 (KKSSYTLCLS…VSIREERGSD (239 aa)). Cys-112 and Cys-348 are oxidised to a cystine. Cys-119, Cys-123, and Cys-126 together coordinate [4Fe-4S] cluster. S-adenosyl-L-methionine-binding positions include 174–175 (GE), Ser-206, 229–231 (SLH), and Asn-305. The active-site S-methylcysteine intermediate is Cys-348.

This sequence belongs to the radical SAM superfamily. RlmN family. It depends on [4Fe-4S] cluster as a cofactor.

Its subcellular location is the cytoplasm. The enzyme catalyses adenosine(2503) in 23S rRNA + 2 reduced [2Fe-2S]-[ferredoxin] + 2 S-adenosyl-L-methionine = 2-methyladenosine(2503) in 23S rRNA + 5'-deoxyadenosine + L-methionine + 2 oxidized [2Fe-2S]-[ferredoxin] + S-adenosyl-L-homocysteine. It catalyses the reaction adenosine(37) in tRNA + 2 reduced [2Fe-2S]-[ferredoxin] + 2 S-adenosyl-L-methionine = 2-methyladenosine(37) in tRNA + 5'-deoxyadenosine + L-methionine + 2 oxidized [2Fe-2S]-[ferredoxin] + S-adenosyl-L-homocysteine. Its function is as follows. Specifically methylates position 2 of adenine 2503 in 23S rRNA and position 2 of adenine 37 in tRNAs. The sequence is that of Probable dual-specificity RNA methyltransferase RlmN from Syntrophomonas wolfei subsp. wolfei (strain DSM 2245B / Goettingen).